The chain runs to 345 residues: Methionine import ATP-binding protein MetN 4 (345 aa).

The ABC transporter domain occupies 2-241 (IELTNITKTF…PQLRTTKRFV (240 aa)). Residue 38–45 (GYSGAGKS) participates in ATP binding.

This sequence belongs to the ABC transporter superfamily. Methionine importer (TC 3.A.1.24) family. As to quaternary structure, the complex is composed of two ATP-binding proteins (MetN), two transmembrane proteins (MetI) and a solute-binding protein (MetQ).

The protein resides in the cell membrane. The enzyme catalyses L-methionine(out) + ATP + H2O = L-methionine(in) + ADP + phosphate + H(+). The catalysed reaction is D-methionine(out) + ATP + H2O = D-methionine(in) + ADP + phosphate + H(+). Functionally, part of the ABC transporter complex MetNIQ involved in methionine import. Responsible for energy coupling to the transport system. The protein is Methionine import ATP-binding protein MetN 4 of Oceanobacillus iheyensis (strain DSM 14371 / CIP 107618 / JCM 11309 / KCTC 3954 / HTE831).